Consider the following 346-residue polypeptide: F(420)H(2) dehydrogenase subunit F (346 aa).

2 4Fe-4S ferredoxin-type domains span residues 5 to 34 (IAEVIQHDVCAACGACEAVCPIGAVTVKKA) and 46 to 76 (YEKGAAFQVCEGCLTCSRICPVVDGFIENEL). [4Fe-4S] cluster contacts are provided by Cys-14, Cys-17, Cys-20, Cys-24, Cys-55, Cys-58, Cys-61, and Cys-65.

The FPO complex is composed of at least 13 different subunits. [4Fe-4S] cluster is required as a cofactor. It depends on FAD as a cofactor.

Its subcellular location is the membrane. It is found in the cytoplasm. The catalysed reaction is methanophenazine + reduced coenzyme F420-(gamma-L-Glu)(n) = dihydromethanophenazine + oxidized coenzyme F420-(gamma-L-Glu)(n) + H(+). It carries out the reaction reduced coenzyme F420-(gamma-L-Glu)(n) + 2 oxidized [2Fe-2S]-[ferredoxin] = oxidized coenzyme F420-(gamma-L-Glu)(n) + 2 reduced [2Fe-2S]-[ferredoxin] + 3 H(+). In terms of biological role, component of the F(420)H(2) dehydrogenase (FPO complex) which is part of the energy-conserving F(420)H(2):heterodisulfide oxidoreductase system. The membrane-bound electron transfer system of the complex plays an important role in the metabolism of methylotrophic methanogens when the organisms grow on methanol or methylamines. Catalyzes the oxidation of methanophenazine to dihydromethanophenazine. It shuttles electrons from F(420)H(2), via FAD and iron-sulfur (Fe-S) centers, to methanophenazine (an electron carrier in the membrane). It couples the redox reaction to proton translocation (for every two electrons transferred, two hydrogen ions are translocated across the cytoplasmic membrane), and thus conserves the redox energy in a proton gradient. It also catalyzes the oxidation of F(420)H(2) with quinones such as 2,3-dimethyl-1,4-naphthoquinone, 2-methyl-1,4-naphthoquinone and tetramethyl-p-benzoquinone. Might have a dual function, acting as an electron input module when connected to the membrane integral Fpo complex, or as a soluble single subunit, being involved in the reoxydation of reduced ferredoxin in the cytoplasm. This chain is F(420)H(2) dehydrogenase subunit F (fpoF), found in Methanosarcina mazei (strain ATCC BAA-159 / DSM 3647 / Goe1 / Go1 / JCM 11833 / OCM 88) (Methanosarcina frisia).